The following is a 75-amino-acid chain: Large ribosomal subunit protein bL31 (75 aa).

This sequence belongs to the bacterial ribosomal protein bL31 family. Type A subfamily. In terms of assembly, part of the 50S ribosomal subunit.

Functionally, binds the 23S rRNA. The sequence is that of Large ribosomal subunit protein bL31 from Acidiphilium cryptum (strain JF-5).